The primary structure comprises 257 residues: Snake venom serine protease Dav-KN (257 aa).

An N-terminal signal peptide occupies residues 1 to 18; the sequence is MVLIRVLANLLILQLSYA. A propeptide spanning residues 19-24 is cleaved from the precursor; that stretch reads QKSSEL. One can recognise a Peptidase S1 domain in the interval 25–248; it reads VIGGDECNIN…HLDWIKGIIA (224 aa). Cystine bridges form between Cys-31-Cys-162, Cys-49-Cys-65, Cys-97-Cys-255, Cys-173-Cys-188, and Cys-199-Cys-224. Residues His-64 and Asp-109 each act as charge relay system in the active site. Ser-203 acts as the Charge relay system in catalysis.

Belongs to the peptidase S1 family. Snake venom subfamily. In terms of assembly, monomer. Expressed by the venom gland.

The protein localises to the secreted. Its function is as follows. Snake venom serine protease that may act in the hemostasis system of the prey. The sequence is that of Snake venom serine protease Dav-KN from Deinagkistrodon acutus (Hundred-pace snake).